We begin with the raw amino-acid sequence, 503 residues long: Probable cytosol aminopeptidase (503 aa).

Mn(2+)-binding residues include lysine 270 and aspartate 275. Lysine 282 is an active-site residue. Residues aspartate 293, aspartate 352, and glutamate 354 each coordinate Mn(2+). Residue arginine 356 is part of the active site.

This sequence belongs to the peptidase M17 family. The cofactor is Mn(2+).

The protein localises to the cytoplasm. It catalyses the reaction Release of an N-terminal amino acid, Xaa-|-Yaa-, in which Xaa is preferably Leu, but may be other amino acids including Pro although not Arg or Lys, and Yaa may be Pro. Amino acid amides and methyl esters are also readily hydrolyzed, but rates on arylamides are exceedingly low.. The enzyme catalyses Release of an N-terminal amino acid, preferentially leucine, but not glutamic or aspartic acids.. In terms of biological role, presumably involved in the processing and regular turnover of intracellular proteins. Catalyzes the removal of unsubstituted N-terminal amino acids from various peptides. In Salmonella agona (strain SL483), this protein is Probable cytosol aminopeptidase.